The sequence spans 397 residues: tRNA-specific 2-thiouridylase MnmA (397 aa).

ATP-binding positions include 19 to 26 (AMSGGVDS) and Leu-45. Catalysis depends on Cys-113, which acts as the Nucleophile. Cys-113 and Cys-210 are oxidised to a cystine. Gly-137 provides a ligand contact to ATP. The tract at residues 160-162 (RDQ) is interaction with tRNA. Residue Cys-210 is the Cysteine persulfide intermediate of the active site.

The protein belongs to the MnmA/TRMU family.

It is found in the cytoplasm. The catalysed reaction is S-sulfanyl-L-cysteinyl-[protein] + uridine(34) in tRNA + AH2 + ATP = 2-thiouridine(34) in tRNA + L-cysteinyl-[protein] + A + AMP + diphosphate + H(+). Functionally, catalyzes the 2-thiolation of uridine at the wobble position (U34) of tRNA, leading to the formation of s(2)U34. The protein is tRNA-specific 2-thiouridylase MnmA of Rhodopseudomonas palustris (strain ATCC BAA-98 / CGA009).